The primary structure comprises 626 residues: DNA mismatch repair protein MutL (626 aa).

Belongs to the DNA mismatch repair MutL/HexB family.

This protein is involved in the repair of mismatches in DNA. It is required for dam-dependent methyl-directed DNA mismatch repair. May act as a 'molecular matchmaker', a protein that promotes the formation of a stable complex between two or more DNA-binding proteins in an ATP-dependent manner without itself being part of a final effector complex. The polypeptide is DNA mismatch repair protein MutL (Chlorobium luteolum (strain DSM 273 / BCRC 81028 / 2530) (Pelodictyon luteolum)).